The following is a 600-amino-acid chain: Kelch-like protein 24 (600 aa).

A BTB domain is found at 66–133 (TDVIICVEGK…VYTGKVKITT (68 aa)). A BACK domain is found at 168 to 270 (CLGIQRFADT…HPNYFVQTVE (103 aa)). Kelch repeat units lie at residues 314 to 363 (VIVV…ALRN), 365 to 407 (ILVS…VLLG), 408 to 454 (KVYV…SCIG), 456 to 502 (LFVI…SLNN), 504 to 544 (IYVA…VCNG), and 546 to 592 (IYIL…TIHR).

Forms homodimers. Interacts with GRIK2. Component of the BCR(KLHL24) E3 ubiquitin ligase complex, composed of CUL3, RBX1 and KLHL24. Interacts with CUL3. Interacts with KRT14. Post-translationally, autoubiquitinated. Autoubiquitination leads to proteasomal degradation and is necessary to control KLHL24 levels. In terms of tissue distribution, expressed in the brain.

It is found in the perikaryon. The protein localises to the cell projection. It localises to the axon. Its subcellular location is the cytoplasm. The protein resides in the cell junction. It is found in the desmosome. The protein localises to the adherens junction. In terms of biological role, controls KRT14 levels during keratinocytes differentiation. As part of the BCR(KLHL24) E3 ubiquitin ligase complex, mediates ubiquitination of KRT14. Specifically reduces kainate receptor-mediated currents in hippocampal neurons, most probably by modulating channel properties. Has a crucial role in cardiac development and function. In Mus musculus (Mouse), this protein is Kelch-like protein 24 (Klhl24).